A 235-amino-acid chain; its full sequence is Secreted RxLR effector protein 27 (235 aa).

The first 25 residues, 1–25, serve as a signal peptide directing secretion; sequence MTNLFTRHTRRSLTALALLSGGVYA. Residues 36–60 carry the RxLR-dEER motif; the sequence is RSLRVFVTGGQVLWDYRIHFKGIER.

This sequence belongs to the RxLR effector family.

It localises to the secreted. The protein localises to the host cytoplasm. Its subcellular location is the host nucleus. In terms of biological role, effector that acts as a broad suppressor of cell death to interrupt plant immunity. Inhibits cell death induced by cell death-inducing proteins, including the PAMP elicitor INF1 from P.infestans. The polypeptide is Secreted RxLR effector protein 27 (Plasmopara viticola (Downy mildew of grapevine)).